Consider the following 1202-residue polypeptide: PAN2-PAN3 deadenylation complex catalytic subunit PAN2 (1202 aa).

WD repeat units follow at residues 153–193, 195–231, 244–280, and 328–367; these read DENE…QKYA, ETPG…VEHE, VHGN…AITP, and PVGP…SFNP. Residues 368–485 are linker; it reads YSRETEFALP…VGREEEPHLH (118 aa). One can recognise a USP domain in the interval 486-924; it reads MVSKKYRKVT…VPAILYYVKR (439 aa). S791 carries the phosphoserine modification. One can recognise an Exonuclease domain in the interval 975 to 1147; it reads VGLDAEFVTL…EDARTALQLY (173 aa). D978, E980, D1087, and D1139 together coordinate a divalent metal cation. S1189 carries the phosphoserine modification.

It belongs to the peptidase C19 family. PAN2 subfamily. In terms of assembly, forms a heterotrimer with an asymmetric homodimer of the regulatory subunit PAN3 to form the poly(A)-nuclease (PAN) deadenylation complex. Interacts with PAN3 isoform 1/Pan3L and isoform 3/Pan3S. Interacts with ZFP36. The cofactor is a divalent metal cation.

The protein localises to the cytoplasm. It localises to the P-body. It is found in the nucleus. It catalyses the reaction Exonucleolytic cleavage of poly(A) to 5'-AMP.. With respect to regulation, positively regulated by the regulatory subunit PAN3. Catalytic subunit of the poly(A)-nuclease (PAN) deadenylation complex, one of two cytoplasmic mRNA deadenylases involved in general and miRNA-mediated mRNA turnover. PAN specifically shortens poly(A) tails of RNA and the activity is stimulated by poly(A)-binding protein (PABP). PAN deadenylation is followed by rapid degradation of the shortened mRNA tails by the CCR4-NOT complex. Deadenylated mRNAs are then degraded by two alternative mechanisms, namely exosome-mediated 3'-5' exonucleolytic degradation, or deadenylation-dependent mRNA decaping and subsequent 5'-3' exonucleolytic degradation by XRN1. Also acts as an important regulator of the HIF1A-mediated hypoxic response. Required for HIF1A mRNA stability independent of poly(A) tail length regulation. The polypeptide is PAN2-PAN3 deadenylation complex catalytic subunit PAN2 (Homo sapiens (Human)).